Reading from the N-terminus, the 137-residue chain is Interferon-induced transmembrane protein 3 (137 aa).

Topologically, residues 1–57 (MNHTSQAFVNAATGGQPPNYERIKEEYEVSELGAPHGSASVRTTVINMPREVSVPDH) are cytoplasmic. Phosphotyrosine is present on Tyr20. Lys24 participates in a covalent cross-link: Glycyl lysine isopeptide (Lys-Gly) (interchain with G-Cter in ubiquitin). The residue at position 27 (Tyr27) is a Phosphotyrosine. Positions 58–78 (VVWSLFNTLFMNFCCLGFIAY) form an intramembrane region, helical. The interaction with SPP1 stretch occupies residues 60 to 93 (WSLFNTLFMNFCCLGFIAYAYSVKSRDRKMVGDM). 2 S-palmitoyl cysteine lipidation sites follow: Cys71 and Cys72. The Cytoplasmic portion of the chain corresponds to 79 to 109 (AYSVKSRDRKMVGDMTGAQAYASTAKCLNIS). Residues Lys83, Lys88, and Lys104 each participate in a glycyl lysine isopeptide (Lys-Gly) (interchain with G-Cter in ubiquitin) cross-link. The S-palmitoyl cysteine moiety is linked to residue Cys105. Positions 108-133 (ISSLVLSILMVIITIVTVVIIALNAP) are interaction with VAPA. The helical transmembrane segment at 110–130 (SLVLSILMVIITIVTVVIIAL) threads the bilayer. At 131 to 137 (NAPRLQT) the chain is on the extracellular side.

This sequence belongs to the CD225/Dispanin family. Interacts with ATP6V0B. Interacts with CD81. Interacts with SPP1; the interaction reduces OPN expression. Interacts with BRI3. Post-translationally, polyubiquitinated with both 'Lys-48' and 'Lys-63' linkages. Ubiquitination negatively regulates antiviral activity. Lys-24 is the most prevalent ubiquitination site. In terms of processing, phosphorylation at Tyr-20 is required for endosomal and lysosomal location.

The protein resides in the cell membrane. Its subcellular location is the late endosome membrane. The protein localises to the early endosome membrane. It is found in the lysosome membrane. It localises to the cytoplasm. The protein resides in the perinuclear region. IFN-induced antiviral protein which disrupts intracellular cholesterol homeostasis. Inhibits the entry of viruses to the host cell cytoplasm by preventing viral fusion with cholesterol depleted endosomes. May inactivate new enveloped viruses which buds out of the infected cell, by letting them go out with a cholesterol depleted membrane. Active against multiple viruses. Plays a critical role in the structural stability and function of vacuolar ATPase (v-ATPase). Establishes physical contact with the v-ATPase of endosomes which is critical for proper clathrin localization and is also required for the function of the v-ATPase to lower the pH in phagocytic endosomes thus establishing an antiviral state. This Rattus norvegicus (Rat) protein is Interferon-induced transmembrane protein 3.